The sequence spans 335 residues: Trans-1,2-dihydrobenzene-1,2-diol dehydrogenase (335 aa).

Belongs to the Gfo/Idh/MocA family. Homodimer. In terms of tissue distribution, liver, lens, spleen, kidney and small intestine.

It carries out the reaction (1R,2R)-1,2-dihydrobenzene-1,2-diol + NADP(+) = catechol + NADPH + H(+). It catalyses the reaction D-xylose + NADP(+) = D-xylono-1,5-lactone + NADPH + H(+). Its activity is regulated as follows. Strongly inhibited by isoascorbic acid, 4-hydroxyacetophenone and chloromercuriphenylsulphonate. Stimulated by various salts. The chain is Trans-1,2-dihydrobenzene-1,2-diol dehydrogenase (DHDH) from Sus scrofa (Pig).